The following is a 192-amino-acid chain: Glycerol-3-phosphate acyltransferase (192 aa).

A run of 5 helical transmembrane segments spans residues 4–24, 48–68, 74–94, 101–121, and 125–145; these read FAII…DVVI, LVLV…WVGY, YFEL…PIFF, GVAT…GSML, and LLIF…ALIL.

It belongs to the PlsY family. As to quaternary structure, probably interacts with PlsX.

Its subcellular location is the cell inner membrane. It catalyses the reaction an acyl phosphate + sn-glycerol 3-phosphate = a 1-acyl-sn-glycero-3-phosphate + phosphate. It participates in lipid metabolism; phospholipid metabolism. Catalyzes the transfer of an acyl group from acyl-phosphate (acyl-PO(4)) to glycerol-3-phosphate (G3P) to form lysophosphatidic acid (LPA). This enzyme utilizes acyl-phosphate as fatty acyl donor, but not acyl-CoA or acyl-ACP. This chain is Glycerol-3-phosphate acyltransferase, found in Histophilus somni (strain 129Pt) (Haemophilus somnus).